Here is a 142-residue protein sequence, read N- to C-terminus: Deoxyuridine 5'-triphosphate nucleotidohydrolase (142 aa).

Substrate-binding positions include 62-64, Asn75, and 79-81; these read RSG and TID.

Belongs to the dUTPase family. Mg(2+) is required as a cofactor.

It carries out the reaction dUTP + H2O = dUMP + diphosphate + H(+). It participates in pyrimidine metabolism; dUMP biosynthesis; dUMP from dCTP (dUTP route): step 2/2. In terms of biological role, this enzyme is involved in nucleotide metabolism: it produces dUMP, the immediate precursor of thymidine nucleotides and it decreases the intracellular concentration of dUTP so that uracil cannot be incorporated into DNA. The protein is Deoxyuridine 5'-triphosphate nucleotidohydrolase of Picosynechococcus sp. (strain ATCC 27264 / PCC 7002 / PR-6) (Agmenellum quadruplicatum).